We begin with the raw amino-acid sequence, 229 residues long: MAKKKAFIPFLYLASIVFLPWWISLSCNKSLKTWITNSWNTRQSETFLNDIQEKSLLEKFIQLEELFLLDEMIKEDPETHLQKLRIGIHKETIQFIQMYNEDRIHTILHFSTNILCFVILSGYSILGNEELLIINSWVQEFLYNLSDTIKAFSILLLTDLCIGFHSPHGWELMIGYIYKDFGFAHNDQIISGLVSTFPVILDTIFKYWIFRYLNRVSPSLVVIYHSIND.

3 helical membrane-spanning segments follow: residues 6-26 (AFIPFLYLASIVFLPWWISLS), 114-134 (ILCFVILSGYSILGNEELLII), and 189-209 (IISGLVSTFPVILDTIFKYWI).

Belongs to the CemA family.

The protein resides in the plastid. It localises to the chloroplast inner membrane. The catalysed reaction is K(+)(in) + H(+)(out) = K(+)(out) + H(+)(in). In terms of biological role, contributes to K(+)/H(+) antiport activity by supporting proton efflux to control proton extrusion and homeostasis in chloroplasts in a light-dependent manner to modulate photosynthesis. Prevents excessive induction of non-photochemical quenching (NPQ) under continuous-light conditions. Indirectly promotes efficient inorganic carbon uptake into chloroplasts. The protein is Potassium/proton antiporter CemA of Carica papaya (Papaya).